We begin with the raw amino-acid sequence, 358 residues long: UDP-N-acetylglucosamine--N-acetylmuramyl-(pentapeptide) pyrophosphoryl-undecaprenol N-acetylglucosamine transferase (358 aa).

UDP-N-acetyl-alpha-D-glucosamine contacts are provided by residues 10-12 (TGG), Asn124, Ser196, and Gln293.

Belongs to the glycosyltransferase 28 family. MurG subfamily.

It is found in the cell membrane. The catalysed reaction is di-trans,octa-cis-undecaprenyl diphospho-N-acetyl-alpha-D-muramoyl-L-alanyl-D-glutamyl-meso-2,6-diaminopimeloyl-D-alanyl-D-alanine + UDP-N-acetyl-alpha-D-glucosamine = di-trans,octa-cis-undecaprenyl diphospho-[N-acetyl-alpha-D-glucosaminyl-(1-&gt;4)]-N-acetyl-alpha-D-muramoyl-L-alanyl-D-glutamyl-meso-2,6-diaminopimeloyl-D-alanyl-D-alanine + UDP + H(+). It functions in the pathway cell wall biogenesis; peptidoglycan biosynthesis. Cell wall formation. Catalyzes the transfer of a GlcNAc subunit on undecaprenyl-pyrophosphoryl-MurNAc-pentapeptide (lipid intermediate I) to form undecaprenyl-pyrophosphoryl-MurNAc-(pentapeptide)GlcNAc (lipid intermediate II). This chain is UDP-N-acetylglucosamine--N-acetylmuramyl-(pentapeptide) pyrophosphoryl-undecaprenol N-acetylglucosamine transferase, found in Exiguobacterium sp. (strain ATCC BAA-1283 / AT1b).